Here is a 337-residue protein sequence, read N- to C-terminus: N-acetyl-gamma-glutamyl-phosphate reductase (337 aa).

Residue cysteine 155 is part of the active site.

The protein belongs to the NAGSA dehydrogenase family. Type 1 subfamily.

The protein resides in the cytoplasm. It catalyses the reaction N-acetyl-L-glutamate 5-semialdehyde + phosphate + NADP(+) = N-acetyl-L-glutamyl 5-phosphate + NADPH + H(+). Its pathway is amino-acid biosynthesis; L-arginine biosynthesis; N(2)-acetyl-L-ornithine from L-glutamate: step 3/4. Functionally, catalyzes the NADPH-dependent reduction of N-acetyl-5-glutamyl phosphate to yield N-acetyl-L-glutamate 5-semialdehyde. This Alteromonas mediterranea (strain DSM 17117 / CIP 110805 / LMG 28347 / Deep ecotype) protein is N-acetyl-gamma-glutamyl-phosphate reductase.